A 267-amino-acid chain; its full sequence is Phosphate import ATP-binding protein PstB 2 (267 aa).

The region spanning 21–262 (LSTKDLHVYY…AKLQSTSDYV (242 aa)) is the ABC transporter domain. 53–60 (GPSGCGKS) serves as a coordination point for ATP.

The protein belongs to the ABC transporter superfamily. Phosphate importer (TC 3.A.1.7) family. In terms of assembly, the complex is composed of two ATP-binding proteins (PstB), two transmembrane proteins (PstC and PstA) and a solute-binding protein (PstS).

It is found in the cell membrane. The enzyme catalyses phosphate(out) + ATP + H2O = ADP + 2 phosphate(in) + H(+). Part of the ABC transporter complex PstSACB involved in phosphate import. Responsible for energy coupling to the transport system. The polypeptide is Phosphate import ATP-binding protein PstB 2 (Streptococcus mutans serotype c (strain ATCC 700610 / UA159)).